A 311-amino-acid chain; its full sequence is Probable manganese-dependent inorganic pyrophosphatase (311 aa).

Mn(2+)-binding residues include H9, D13, D15, D75, H97, and D149.

The protein belongs to the PPase class C family. Mn(2+) serves as cofactor.

It localises to the cytoplasm. It carries out the reaction diphosphate + H2O = 2 phosphate + H(+). In Lactobacillus delbrueckii subsp. bulgaricus (strain ATCC BAA-365 / Lb-18), this protein is Probable manganese-dependent inorganic pyrophosphatase.